The sequence spans 803 residues: Lon protease (803 aa).

Residues 9-202 (MPVLPLRDVV…YLLGMMESEA (194 aa)) enclose the Lon N-terminal domain. 356 to 363 (GPPGVGKT) is an ATP binding site. The Lon proteolytic domain maps to 592-773 (QNRIGEVTGL…DEVLGFALEN (182 aa)). Active-site residues include Ser679 and Lys722.

It belongs to the peptidase S16 family. Homohexamer. Organized in a ring with a central cavity.

Its subcellular location is the cytoplasm. It carries out the reaction Hydrolysis of proteins in presence of ATP.. In terms of biological role, ATP-dependent serine protease that mediates the selective degradation of mutant and abnormal proteins as well as certain short-lived regulatory proteins. Required for cellular homeostasis and for survival from DNA damage and developmental changes induced by stress. Degrades polypeptides processively to yield small peptide fragments that are 5 to 10 amino acids long. Binds to DNA in a double-stranded, site-specific manner. This Haemophilus influenzae (strain ATCC 51907 / DSM 11121 / KW20 / Rd) protein is Lon protease.